A 119-amino-acid polypeptide reads, in one-letter code: MNFNSRLESRYSYELMKKASEYSELYGDNLIQLGLEDGIYFYKGMAIGDVFGLARYSDWTISNPECEVIPQDDLIEKMKSFNSSFIVISKRSYANFNPEKYPKFKVLMDTPNGILIAIK.

This is an uncharacterized protein from Shigella flexneri.